A 359-amino-acid chain; its full sequence is Guanine nucleotide-binding protein subunit alpha-11 (359 aa).

S-palmitoyl cysteine attachment occurs at residues cysteine 9 and cysteine 10. One can recognise a G-alpha domain in the interval 38-359; sequence RELKLLLLGT…QLNLKEYNLV (322 aa). A G1 motif region spans residues 41–54; sequence KLLLLGTGESGKST. Residues 46 to 53 and 180 to 183 each bind GTP; these read GTGESGKS and LRVR. Serine 53 contributes to the Mg(2+) binding site. The tract at residues 178 to 186 is G2 motif; it reads DVLRVRVPT. Threonine 186 is a binding site for Mg(2+). A G3 motif region spans residues 201–210; it reads FRMVDVGGQR. Positions 270-277 are G4 motif; sequence ILFLNKKD. Residues 274–277 and alanine 331 contribute to the GTP site; that span reads NKKD. The interval 329–334 is G5 motif; that stretch reads TCATDT.

Belongs to the G-alpha family. G(q) subfamily. G proteins are composed of 3 units; alpha, beta and gamma. The alpha chain contains the guanine nucleotide binding site. Interacts with RGS22. Interacts with NTSR1.

The protein resides in the cell membrane. It localises to the cytoplasm. The enzyme catalyses GTP + H2O = GDP + phosphate + H(+). Its function is as follows. Guanine nucleotide-binding proteins (G proteins) function as transducers downstream of G protein-coupled receptors (GPCRs) in numerous signaling cascades. The alpha chain contains the guanine nucleotide binding site and alternates between an active, GTP-bound state and an inactive, GDP-bound state. Signaling by an activated GPCR promotes GDP release and GTP binding. The alpha subunit has a low GTPase activity that converts bound GTP to GDP, thereby terminating the signal. Both GDP release and GTP hydrolysis are modulated by numerous regulatory proteins. Signaling is mediated via phospholipase C-beta-dependent inositol lipid hydrolysis for signal propagation: activates phospholipase C-beta: following GPCR activation, GNA11 activates PLC-beta (PLCB1, PLCB2, PLCB3 or PLCB4), leading to production of diacylglycerol (DAG) and inositol 1,4,5-trisphosphate (IP3). Transduces FFAR4 signaling in response to long-chain fatty acids (LCFAs). Together with GNAQ, required for heart development. In the respiratory epithelium, transmits OXGR1-dependent signals that lead to downstream intracellular Ca(2+) release and mucocilliary clearance of airborne pathogens. In Sus scrofa (Pig), this protein is Guanine nucleotide-binding protein subunit alpha-11 (GNA11).